Consider the following 363-residue polypeptide: NAD(P)H-quinone oxidoreductase subunit 1, chloroplastic (363 aa).

Transmembrane regions (helical) follow at residues 30–50, 98–118, 127–147, 165–185, 203–223, 248–268, 300–320, and 336–356; these read LVPIVTLVLGITIGVLVIVWL, FSIGPSIAVISIFLSYSVIPF, LSIGVFFWIAISSIAPVGLLM, AAQSISYEIPLALCVLSISLL, FWGWNLWRQPIGFIVFLISSL, YSGIKFGLFYIASYLNLLVSS, VFGTLIGIFITLAKTYLFLFI, and LLNLGWKFLLPISLGNLLLTT.

The protein belongs to the complex I subunit 1 family. In terms of assembly, NDH is composed of at least 16 different subunits, 5 of which are encoded in the nucleus.

It is found in the plastid. The protein resides in the chloroplast thylakoid membrane. It carries out the reaction a plastoquinone + NADH + (n+1) H(+)(in) = a plastoquinol + NAD(+) + n H(+)(out). The enzyme catalyses a plastoquinone + NADPH + (n+1) H(+)(in) = a plastoquinol + NADP(+) + n H(+)(out). Its function is as follows. NDH shuttles electrons from NAD(P)H:plastoquinone, via FMN and iron-sulfur (Fe-S) centers, to quinones in the photosynthetic chain and possibly in a chloroplast respiratory chain. The immediate electron acceptor for the enzyme in this species is believed to be plastoquinone. Couples the redox reaction to proton translocation, and thus conserves the redox energy in a proton gradient. This Solanum lycopersicum (Tomato) protein is NAD(P)H-quinone oxidoreductase subunit 1, chloroplastic.